The sequence spans 184 residues: ATP synthase subunit delta (184 aa).

This sequence belongs to the ATPase delta chain family. F-type ATPases have 2 components, F(1) - the catalytic core - and F(0) - the membrane proton channel. F(1) has five subunits: alpha(3), beta(3), gamma(1), delta(1), epsilon(1). F(0) has three main subunits: a(1), b(2) and c(10-14). The alpha and beta chains form an alternating ring which encloses part of the gamma chain. F(1) is attached to F(0) by a central stalk formed by the gamma and epsilon chains, while a peripheral stalk is formed by the delta and b chains.

The protein resides in the cell inner membrane. F(1)F(0) ATP synthase produces ATP from ADP in the presence of a proton or sodium gradient. F-type ATPases consist of two structural domains, F(1) containing the extramembraneous catalytic core and F(0) containing the membrane proton channel, linked together by a central stalk and a peripheral stalk. During catalysis, ATP synthesis in the catalytic domain of F(1) is coupled via a rotary mechanism of the central stalk subunits to proton translocation. In terms of biological role, this protein is part of the stalk that links CF(0) to CF(1). It either transmits conformational changes from CF(0) to CF(1) or is implicated in proton conduction. In Rickettsia massiliae (strain Mtu5), this protein is ATP synthase subunit delta.